A 45-amino-acid chain; its full sequence is Photosystem II reaction center protein K (45 aa).

The propeptide occupies Met-1–Ser-8. The helical transmembrane segment at Ile-20–Ala-40 threads the bilayer.

Belongs to the PsbK family. PSII is composed of 1 copy each of membrane proteins PsbA, PsbB, PsbC, PsbD, PsbE, PsbF, PsbH, PsbI, PsbJ, PsbK, PsbL, PsbM, PsbT, PsbX, PsbY, PsbZ, Psb30/Ycf12, at least 3 peripheral proteins of the oxygen-evolving complex and a large number of cofactors. It forms dimeric complexes.

The protein resides in the plastid. Its subcellular location is the chloroplast thylakoid membrane. In terms of biological role, one of the components of the core complex of photosystem II (PSII). PSII is a light-driven water:plastoquinone oxidoreductase that uses light energy to abstract electrons from H(2)O, generating O(2) and a proton gradient subsequently used for ATP formation. It consists of a core antenna complex that captures photons, and an electron transfer chain that converts photonic excitation into a charge separation. This is Photosystem II reaction center protein K from Emiliania huxleyi (Coccolithophore).